Reading from the N-terminus, the 440-residue chain is tRNA-2-methylthio-N(6)-dimethylallyladenosine synthase (440 aa).

One can recognise an MTTase N-terminal domain in the interval 5-121; the sequence is KKLYIKTYGC…LPEMEAKAGT (117 aa). Residues C14, C50, C84, C159, C163, and C166 each coordinate [4Fe-4S] cluster. Residues 145-378 form the Radical SAM core domain; it reads AKRGPTAFLT…LTRQQREVQD (234 aa). The region spanning 378–440 is the TRAM domain; sequence DSMVGRELGV…ANSLAGELID (63 aa).

The protein belongs to the methylthiotransferase family. MiaB subfamily. As to quaternary structure, monomer. It depends on [4Fe-4S] cluster as a cofactor.

The protein localises to the cytoplasm. The enzyme catalyses N(6)-dimethylallyladenosine(37) in tRNA + (sulfur carrier)-SH + AH2 + 2 S-adenosyl-L-methionine = 2-methylsulfanyl-N(6)-dimethylallyladenosine(37) in tRNA + (sulfur carrier)-H + 5'-deoxyadenosine + L-methionine + A + S-adenosyl-L-homocysteine + 2 H(+). Functionally, catalyzes the methylthiolation of N6-(dimethylallyl)adenosine (i(6)A), leading to the formation of 2-methylthio-N6-(dimethylallyl)adenosine (ms(2)i(6)A) at position 37 in tRNAs that read codons beginning with uridine. The polypeptide is tRNA-2-methylthio-N(6)-dimethylallyladenosine synthase (Ruegeria sp. (strain TM1040) (Silicibacter sp.)).